The chain runs to 537 residues: Putative cysteine ligase BshC (537 aa).

The stretch at 417-457 (ASEQFLNELDQLEAQQKETYERLAAEVQGNEDNKNLVEKNN) forms a coiled coil.

The protein belongs to the BshC family.

Involved in bacillithiol (BSH) biosynthesis. May catalyze the last step of the pathway, the addition of cysteine to glucosamine malate (GlcN-Mal) to generate BSH. The chain is Putative cysteine ligase BshC from Staphylococcus carnosus (strain TM300).